We begin with the raw amino-acid sequence, 1574 residues long: Pentafunctional AROM polypeptide (1574 aa).

The tract at residues 1-384 (MSCSNNTEPT…HEPRATTVED (384 aa)) is 3-dehydroquinate synthase. Residues 49 to 51 (DTN), 85 to 88 (EISK), 116 to 118 (GGV), and D121 each bind NAD(+). Residue R132 participates in 7-phospho-2-dehydro-3-deoxy-D-arabino-heptonate binding. 141 to 142 (TT) is an NAD(+) binding site. 2 residues coordinate 7-phospho-2-dehydro-3-deoxy-D-arabino-heptonate: D148 and K154. K163 lines the NAD(+) pocket. A 7-phospho-2-dehydro-3-deoxy-D-arabino-heptonate-binding site is contributed by N164. NAD(+) contacts are provided by residues 181 to 184 (FLET) and N192. E196 is a binding site for Zn(2+). 7-phospho-2-dehydro-3-deoxy-D-arabino-heptonate contacts are provided by residues 196-199 (EVIK) and K250. Residue E260 is the Proton acceptor; for 3-dehydroquinate synthase activity of the active site. 7-phospho-2-dehydro-3-deoxy-D-arabino-heptonate contacts are provided by residues 264–268 (RNLLN) and H271. H271 lines the Zn(2+) pocket. H275 serves as the catalytic Proton acceptor; for 3-dehydroquinate synthase activity. H287 and K356 together coordinate 7-phospho-2-dehydro-3-deoxy-D-arabino-heptonate. H287 provides a ligand contact to Zn(2+). The segment at 397–837 (ITPGVSTKLA…WDTLSQSFGL (441 aa)) is EPSP synthase. The For EPSP synthase activity role is filled by C819. A shikimate kinase region spans residues 858–1052 (TRSVFIVGMR…TAKEQSFFVS (195 aa)). 865-872 (GMRGAGKT) is an ATP binding site. A 3-dehydroquinase region spans residues 1053-1266 (LTVPSVDSAV…AAPGQLSAAE (214 aa)). H1169 functions as the Proton acceptor; for 3-dehydroquinate dehydratase activity in the catalytic mechanism. The Schiff-base intermediate with substrate; for 3-dehydroquinate dehydratase activity role is filled by K1197. A shikimate dehydrogenase region spans residues 1279 to 1574 (AQSFHLFGKP…NGDEIPTSTD (296 aa)).

In the N-terminal section; belongs to the sugar phosphate cyclases superfamily. Dehydroquinate synthase family. This sequence in the 2nd section; belongs to the EPSP synthase family. It in the 3rd section; belongs to the shikimate kinase family. The protein in the 4th section; belongs to the type-I 3-dehydroquinase family. In the C-terminal section; belongs to the shikimate dehydrogenase family. In terms of assembly, homodimer. The cofactor is Zn(2+).

Its subcellular location is the cytoplasm. The catalysed reaction is 7-phospho-2-dehydro-3-deoxy-D-arabino-heptonate = 3-dehydroquinate + phosphate. The enzyme catalyses 3-dehydroquinate = 3-dehydroshikimate + H2O. It carries out the reaction shikimate + NADP(+) = 3-dehydroshikimate + NADPH + H(+). It catalyses the reaction shikimate + ATP = 3-phosphoshikimate + ADP + H(+). The catalysed reaction is 3-phosphoshikimate + phosphoenolpyruvate = 5-O-(1-carboxyvinyl)-3-phosphoshikimate + phosphate. It participates in metabolic intermediate biosynthesis; chorismate biosynthesis; chorismate from D-erythrose 4-phosphate and phosphoenolpyruvate: step 2/7. Its pathway is metabolic intermediate biosynthesis; chorismate biosynthesis; chorismate from D-erythrose 4-phosphate and phosphoenolpyruvate: step 3/7. It functions in the pathway metabolic intermediate biosynthesis; chorismate biosynthesis; chorismate from D-erythrose 4-phosphate and phosphoenolpyruvate: step 4/7. The protein operates within metabolic intermediate biosynthesis; chorismate biosynthesis; chorismate from D-erythrose 4-phosphate and phosphoenolpyruvate: step 5/7. It participates in metabolic intermediate biosynthesis; chorismate biosynthesis; chorismate from D-erythrose 4-phosphate and phosphoenolpyruvate: step 6/7. Its function is as follows. The AROM polypeptide catalyzes 5 consecutive enzymatic reactions in prechorismate polyaromatic amino acid biosynthesis. The sequence is that of Pentafunctional AROM polypeptide from Verticillium alfalfae (strain VaMs.102 / ATCC MYA-4576 / FGSC 10136) (Verticillium wilt of alfalfa).